The chain runs to 321 residues: Mitochondrial coenzyme A transporter SLC25A42 (321 aa).

Solcar repeat units follow at residues 33 to 119 (RSVL…YKGI), 131 to 216 (LPPV…LKKT), and 226 to 314 (PFPY…TQIL). 6 consecutive transmembrane segments (helical) span residues 35-55 (VLNS…AVAP), 91-111 (LWRG…IQFC), 137-154 (LLAG…TYPL), 191-208 (GFTP…LSFF), 232-252 (LVFG…LDVV), and 295-315 (VKGP…QILL).

This sequence belongs to the mitochondrial carrier (TC 2.A.29) family.

It localises to the mitochondrion inner membrane. It carries out the reaction ADP(out) + CoA(in) = ADP(in) + CoA(out). The enzyme catalyses 3'-dephospho-CoA(in) + ADP(out) = 3'-dephospho-CoA(out) + ADP(in). It catalyses the reaction adenosine 3',5'-bisphosphate(in) + ADP(out) = adenosine 3',5'-bisphosphate(out) + ADP(in). The catalysed reaction is AMP(in) + ADP(out) = AMP(out) + ADP(in). It carries out the reaction dADP(in) + ADP(out) = dADP(out) + ADP(in). The enzyme catalyses ADP(in) + ATP(out) = ADP(out) + ATP(in). Mitochondrial carrier mediating the transport of coenzyme A (CoA) in mitochondria in exchange for intramitochondrial (deoxy)adenine nucleotides and adenosine 3',5'-diphosphate. The protein is Mitochondrial coenzyme A transporter SLC25A42 (slc25a42) of Danio rerio (Zebrafish).